A 336-amino-acid polypeptide reads, in one-letter code: Ferredoxin--NADP reductase (336 aa).

Aspartate 37, glutamine 45, tyrosine 50, valine 90, phenylalanine 124, aspartate 286, and threonine 327 together coordinate FAD.

This sequence belongs to the ferredoxin--NADP reductase type 2 family. As to quaternary structure, homodimer. FAD is required as a cofactor.

The enzyme catalyses 2 reduced [2Fe-2S]-[ferredoxin] + NADP(+) + H(+) = 2 oxidized [2Fe-2S]-[ferredoxin] + NADPH. The sequence is that of Ferredoxin--NADP reductase from Enterococcus faecalis (strain ATCC 700802 / V583).